The following is a 347-amino-acid chain: Selenide, water dikinase (347 aa).

Residue Cys17 is part of the active site. ATP is bound by residues Lys20 and Thr48–Asp50. Asp51 contributes to the Mg(2+) binding site. ATP-binding positions include Asp68, Asp91, and Gly139–Ser141. Position 91 (Asp91) interacts with Mg(2+). Asp227 lines the Mg(2+) pocket.

The protein belongs to the selenophosphate synthase 1 family. Class I subfamily. In terms of assembly, homodimer. The cofactor is Mg(2+).

It carries out the reaction hydrogenselenide + ATP + H2O = selenophosphate + AMP + phosphate + 2 H(+). Synthesizes selenophosphate from selenide and ATP. The chain is Selenide, water dikinase from Escherichia coli O157:H7.